The primary structure comprises 1353 residues: DNA-directed RNA polymerase subunit beta' (1353 aa).

The interval 1–117 (MSDNRLFTSV…AFQKLNDLFK (117 aa)) is unknown. Residues 118–1353 (LYNHFPSISS…SELTKKTNQN (1236 aa)) form a DNA-directed RNA polymerase subunit beta' region. Positions 189, 191, 203, and 206 each coordinate Zn(2+). 3 residues coordinate Mg(2+): D578, D580, and D582.

Belongs to the RNA polymerase beta' chain family. As to quaternary structure, the RNAP catalytic core consists of 2 alpha, 1 beta, 1 beta' and 1 omega subunit. When a sigma factor is associated with the core the holoenzyme is formed, which can initiate transcription. Mg(2+) is required as a cofactor. Zn(2+) serves as cofactor.

The catalysed reaction is RNA(n) + a ribonucleoside 5'-triphosphate = RNA(n+1) + diphosphate. In terms of biological role, DNA-dependent RNA polymerase catalyzes the transcription of DNA into RNA using the four ribonucleoside triphosphates as substrates. This chain is DNA-directed RNA polymerase subunit beta', found in Aster yellows witches'-broom phytoplasma (strain AYWB).